The primary structure comprises 407 residues: Bifunctional enzyme IspD/IspF (407 aa).

Positions 1–246 (MTEASENASA…SSERTHFPDI (246 aa)) are 2-C-methyl-D-erythritol 4-phosphate cytidylyltransferase. A 2-C-methyl-D-erythritol 2,4-cyclodiphosphate synthase region spans residues 247 to 407 (RTGNGYDVHA…SVVFPGEVPE (161 aa)). 2 residues coordinate a divalent metal cation: Asp253 and His255. 4-CDP-2-C-methyl-D-erythritol 2-phosphate contacts are provided by residues 253–255 (DVH) and 279–280 (HS). His287 contacts a divalent metal cation. 4-CDP-2-C-methyl-D-erythritol 2-phosphate is bound by residues 301 to 303 (DIG), 377 to 380 (TTNE), Phe384, and Arg387.

This sequence in the N-terminal section; belongs to the IspD/TarI cytidylyltransferase family. IspD subfamily. The protein in the C-terminal section; belongs to the IspF family. A divalent metal cation serves as cofactor.

The enzyme catalyses 2-C-methyl-D-erythritol 4-phosphate + CTP + H(+) = 4-CDP-2-C-methyl-D-erythritol + diphosphate. It catalyses the reaction 4-CDP-2-C-methyl-D-erythritol 2-phosphate = 2-C-methyl-D-erythritol 2,4-cyclic diphosphate + CMP. It participates in isoprenoid biosynthesis; isopentenyl diphosphate biosynthesis via DXP pathway; isopentenyl diphosphate from 1-deoxy-D-xylulose 5-phosphate: step 2/6. The protein operates within isoprenoid biosynthesis; isopentenyl diphosphate biosynthesis via DXP pathway; isopentenyl diphosphate from 1-deoxy-D-xylulose 5-phosphate: step 4/6. Its function is as follows. Bifunctional enzyme that catalyzes the formation of 4-diphosphocytidyl-2-C-methyl-D-erythritol from CTP and 2-C-methyl-D-erythritol 4-phosphate (MEP) (IspD), and catalyzes the conversion of 4-diphosphocytidyl-2-C-methyl-D-erythritol 2-phosphate (CDP-ME2P) to 2-C-methyl-D-erythritol 2,4-cyclodiphosphate (ME-CPP) with a corresponding release of cytidine 5-monophosphate (CMP) (IspF). The polypeptide is Bifunctional enzyme IspD/IspF (Mesorhizobium japonicum (strain LMG 29417 / CECT 9101 / MAFF 303099) (Mesorhizobium loti (strain MAFF 303099))).